The primary structure comprises 337 residues: Anthranilate phosphoribosyltransferase (337 aa).

Residues glycine 78, 81–82 (GD), threonine 86, 88–91 (NIST), 106–114 (KHGNRSVSS), and serine 118 each bind 5-phospho-alpha-D-ribose 1-diphosphate. Residue glycine 78 participates in anthranilate binding. A Mg(2+)-binding site is contributed by serine 90. Asparagine 109 lines the anthranilate pocket. Arginine 164 serves as a coordination point for anthranilate. Positions 222 and 223 each coordinate Mg(2+).

Belongs to the anthranilate phosphoribosyltransferase family. In terms of assembly, homodimer. Requires Mg(2+) as cofactor.

The enzyme catalyses N-(5-phospho-beta-D-ribosyl)anthranilate + diphosphate = 5-phospho-alpha-D-ribose 1-diphosphate + anthranilate. It participates in amino-acid biosynthesis; L-tryptophan biosynthesis; L-tryptophan from chorismate: step 2/5. Its function is as follows. Catalyzes the transfer of the phosphoribosyl group of 5-phosphorylribose-1-pyrophosphate (PRPP) to anthranilate to yield N-(5'-phosphoribosyl)-anthranilate (PRA). This is Anthranilate phosphoribosyltransferase from Idiomarina loihiensis (strain ATCC BAA-735 / DSM 15497 / L2-TR).